Consider the following 364-residue polypeptide: Alanine racemase (364 aa).

The active-site Proton acceptor; specific for D-alanine is the lysine 35. Lysine 35 carries the post-translational modification N6-(pyridoxal phosphate)lysine. Arginine 131 is a binding site for substrate. The active-site Proton acceptor; specific for L-alanine is tyrosine 256. Methionine 304 lines the substrate pocket.

This sequence belongs to the alanine racemase family. Requires pyridoxal 5'-phosphate as cofactor.

The enzyme catalyses L-alanine = D-alanine. It functions in the pathway amino-acid biosynthesis; D-alanine biosynthesis; D-alanine from L-alanine: step 1/1. Catalyzes the interconversion of L-alanine and D-alanine. May also act on other amino acids. This chain is Alanine racemase (alr), found in Chromohalobacter salexigens (strain ATCC BAA-138 / DSM 3043 / CIP 106854 / NCIMB 13768 / 1H11).